We begin with the raw amino-acid sequence, 124 residues long: MEAKAVARTIRIAPRKVRLVLDLIRGKEVAEAIAILKLTNKASSPVVEKLLMSALANAEHNYDMNIDSLVVKEAYANEGPTLKRFRPRAQGRASAINKRTSHITIVVADKEVKTSNTEAQEEAK.

This sequence belongs to the universal ribosomal protein uL22 family. In terms of assembly, part of the 50S ribosomal subunit.

In terms of biological role, this protein binds specifically to 23S rRNA; its binding is stimulated by other ribosomal proteins, e.g. L4, L17, and L20. It is important during the early stages of 50S assembly. It makes multiple contacts with different domains of the 23S rRNA in the assembled 50S subunit and ribosome. The globular domain of the protein is located near the polypeptide exit tunnel on the outside of the subunit, while an extended beta-hairpin is found that lines the wall of the exit tunnel in the center of the 70S ribosome. This is Large ribosomal subunit protein uL22 from Macrococcus caseolyticus (strain JCSC5402) (Macrococcoides caseolyticum).